The sequence spans 454 residues: uncharacterized protein (454 aa).

4 residues coordinate [4Fe-4S] cluster: cysteine 73, cysteine 79, cysteine 82, and cysteine 154. S-adenosyl-L-methionine-binding residues include glutamine 279, phenylalanine 307, aspartate 328, and aspartate 381. Residue cysteine 408 is the Nucleophile of the active site.

Belongs to the class I-like SAM-binding methyltransferase superfamily. RNA M5U methyltransferase family.

This is an uncharacterized protein from Leptospira interrogans serogroup Icterohaemorrhagiae serovar copenhageni (strain Fiocruz L1-130).